Reading from the N-terminus, the 326-residue chain is tRNA-modifying protein YgfZ (326 aa).

Residues W27 and W189 each coordinate folate.

The protein belongs to the tRNA-modifying YgfZ family.

It is found in the cytoplasm. Functionally, folate-binding protein involved in regulating the level of ATP-DnaA and in the modification of some tRNAs. It is probably a key factor in regulatory networks that act via tRNA modification, such as initiation of chromosomal replication. The sequence is that of tRNA-modifying protein YgfZ from Salmonella typhimurium (strain LT2 / SGSC1412 / ATCC 700720).